The primary structure comprises 286 residues: B3 domain-containing protein REM20 (286 aa).

Positions 9-102 (PRFFKVFLVE…TFEVSVFDRW (94 aa)) form a DNA-binding region, TF-B3. Positions 117 to 161 (SDSDSDSVVEDEKDSTDVVEDDDDEDEDEDEDDDGSFDEDEEISQ) are disordered. The segment covering 119 to 159 (SDSDSVVEDEKDSTDVVEDDDDEDEDEDEDDDGSFDEDEEI) has biased composition (acidic residues).

It is found in the nucleus. The chain is B3 domain-containing protein REM20 (REM20) from Arabidopsis thaliana (Mouse-ear cress).